We begin with the raw amino-acid sequence, 155 residues long: Small ribosomal subunit protein uS7 (155 aa).

The protein belongs to the universal ribosomal protein uS7 family. As to quaternary structure, part of the 30S ribosomal subunit. Contacts proteins S9 and S11.

Functionally, one of the primary rRNA binding proteins, it binds directly to 16S rRNA where it nucleates assembly of the head domain of the 30S subunit. Is located at the subunit interface close to the decoding center, probably blocks exit of the E-site tRNA. The sequence is that of Small ribosomal subunit protein uS7 from Helicobacter pylori (strain Shi470).